Consider the following 40-residue polypeptide: Photosystem II reaction center protein J (40 aa).

A helical membrane pass occupies residues 8 to 28; that stretch reads IPLWIIGTVAGILVIGLIGIF.

This sequence belongs to the PsbJ family. In terms of assembly, PSII is composed of 1 copy each of membrane proteins PsbA, PsbB, PsbC, PsbD, PsbE, PsbF, PsbH, PsbI, PsbJ, PsbK, PsbL, PsbM, PsbT, PsbX, PsbY, PsbZ, Psb30/Ycf12, at least 3 peripheral proteins of the oxygen-evolving complex and a large number of cofactors. It forms dimeric complexes.

The protein localises to the plastid. The protein resides in the chloroplast thylakoid membrane. Its function is as follows. One of the components of the core complex of photosystem II (PSII). PSII is a light-driven water:plastoquinone oxidoreductase that uses light energy to abstract electrons from H(2)O, generating O(2) and a proton gradient subsequently used for ATP formation. It consists of a core antenna complex that captures photons, and an electron transfer chain that converts photonic excitation into a charge separation. In Nicotiana sylvestris (Wood tobacco), this protein is Photosystem II reaction center protein J.